Consider the following 558-residue polypeptide: uncharacterized protein (558 aa).

Residues 7-206 (SNFIDMLRLG…FACFLEGMLS (200 aa)) form the DhaL domain.

This is an uncharacterized protein from Mycoplasma pneumoniae (strain ATCC 29342 / M129 / Subtype 1) (Mycoplasmoides pneumoniae).